The chain runs to 722 residues: Polyribonucleotide nucleotidyltransferase (722 aa).

2 residues coordinate Mg(2+): Asp-495 and Asp-501. The KH domain maps to 562 to 621; it reads PRLLSFRIDPELIGTVIGPGGRTIKGITERTNTKIDIEDGGIVTIASHDGVAAEEAQKII. An S1 motif domain is found at 631–699; that stretch reads GEIFTGSITR…NRGRINLTLR (69 aa). Polar residues predominate over residues 701 to 711; that stretch reads VSQNNNDMNYP. A disordered region spans residues 701 to 722; that stretch reads VSQNNNDMNYPQPTPTPVAPLN. Residues 712–722 are compositionally biased toward pro residues; it reads QPTPTPVAPLN.

Belongs to the polyribonucleotide nucleotidyltransferase family. Requires Mg(2+) as cofactor.

The protein localises to the cytoplasm. It catalyses the reaction RNA(n+1) + phosphate = RNA(n) + a ribonucleoside 5'-diphosphate. Functionally, involved in mRNA degradation. Catalyzes the phosphorolysis of single-stranded polyribonucleotides processively in the 3'- to 5'-direction. This chain is Polyribonucleotide nucleotidyltransferase, found in Prochlorococcus marinus (strain MIT 9211).